A 156-amino-acid polypeptide reads, in one-letter code: SsrA-binding protein (156 aa).

Residues 127 to 156 (GKKKYDKREDLKKKDAKRDVDRAMRDRQKY) form a disordered region. Residues 132–156 (DKREDLKKKDAKRDVDRAMRDRQKY) are compositionally biased toward basic and acidic residues.

It belongs to the SmpB family.

It is found in the cytoplasm. Functionally, required for rescue of stalled ribosomes mediated by trans-translation. Binds to transfer-messenger RNA (tmRNA), required for stable association of tmRNA with ribosomes. tmRNA and SmpB together mimic tRNA shape, replacing the anticodon stem-loop with SmpB. tmRNA is encoded by the ssrA gene; the 2 termini fold to resemble tRNA(Ala) and it encodes a 'tag peptide', a short internal open reading frame. During trans-translation Ala-aminoacylated tmRNA acts like a tRNA, entering the A-site of stalled ribosomes, displacing the stalled mRNA. The ribosome then switches to translate the ORF on the tmRNA; the nascent peptide is terminated with the 'tag peptide' encoded by the tmRNA and targeted for degradation. The ribosome is freed to recommence translation, which seems to be the essential function of trans-translation. The sequence is that of SsrA-binding protein from Exiguobacterium sp. (strain ATCC BAA-1283 / AT1b).